The following is a 252-amino-acid chain: MSDWTPSLYLHFAAERSRPAVELLARVPLENIEYVADLGCGPGNSTALLHHRWPAARITGIDSSPAMIAEARSALPDCQFVEADIRNWQPKQALDLIFANASLQWLPDHYELFPHLVSLLSPQGVLAVQMPDNWLEPTHVLMREVAWEQNYPDRGREPLAGVHAYYDILSEAGCEVDIWRTTYYHQMPSHQAIIDWVTATGLRPWLQDLTESEQQHFLTRYHQMLEEQYPLQENGQILLAFPRLFIVARRTE.

Belongs to the methyltransferase superfamily. Tam family.

Its subcellular location is the cytoplasm. It catalyses the reaction trans-aconitate + S-adenosyl-L-methionine = (E)-3-(methoxycarbonyl)pent-2-enedioate + S-adenosyl-L-homocysteine. Catalyzes the S-adenosylmethionine monomethyl esterification of trans-aconitate. This chain is Trans-aconitate 2-methyltransferase, found in Escherichia fergusonii (strain ATCC 35469 / DSM 13698 / CCUG 18766 / IAM 14443 / JCM 21226 / LMG 7866 / NBRC 102419 / NCTC 12128 / CDC 0568-73).